The primary structure comprises 36 residues: SFGSGELVXGEXPXFEKIIVKGIDAEVASAPMQVML.

Residues 19–36 (IVKGIDAEVASAPMQVML) enclose the Peptidase S1 domain.

It belongs to the peptidase S1 family. In terms of assembly, forms a heterodimer with SERPINA5. The gamma-carboxyglutamyl residues, which bind calcium ions, result from the carboxylation of glutamyl residues by a microsomal enzyme, the vitamin K-dependent carboxylase. The modified residues are necessary for the calcium-dependent interaction with a negatively charged phospholipid surface, which is essential for the conversion of prothrombin to thrombin. In terms of processing, N-glycosylated. As to expression, expressed by the liver and secreted in plasma.

It localises to the secreted. The catalysed reaction is Selective cleavage of Arg-|-Gly bonds in fibrinogen to form fibrin and release fibrinopeptides A and B.. Its activity is regulated as follows. Inhibited by SERPINA5. Its function is as follows. Thrombin, which cleaves bonds after Arg and Lys, converts fibrinogen to fibrin and activates factors V, VII, VIII, XIII, and, in complex with thrombomodulin, protein C. Functions in blood homeostasis, inflammation and wound healing. This chain is Thrombin, found in Salmo salar (Atlantic salmon).